A 370-amino-acid chain; its full sequence is Nociceptin receptor (370 aa).

Residues 1–48 are Extracellular-facing; sequence MESLFPAPFWEVLYGSPLQGNLSLLSPNHSLLPPHLLLNASHGAFLPL. Asn-21, Asn-28, and Asn-39 each carry an N-linked (GlcNAc...) asparagine glycan. The helical transmembrane segment at 49 to 74 threads the bilayer; that stretch reads GLKVTIVGLYLAVCVGGLLGNCLVMY. Topologically, residues 75–87 are cytoplasmic; sequence VILRHTKMKTATN. The chain crosses the membrane as a helical span at residues 88 to 109; that stretch reads IYIFNLALADTAVLLTLPFQGT. At 110–124 the chain is on the extracellular side; it reads DVLLGFWPFGNALCK. Cys-123 and Cys-200 are joined by a disulfide. A helical membrane pass occupies residues 125–146; sequence AVIAIDYYNMFTSAFTLTAMSV. The Cytoplasmic portion of the chain corresponds to 147–165; sequence DRYVAICHPIRALDVRTSS. Residues 166–188 form a helical membrane-spanning segment; it reads KAQAVNVAIWALASIVGVPVAIM. Topologically, residues 189 to 211 are extracellular; the sequence is GSAQVEDEEIECLVEIPAPQDYW. The helical transmembrane segment at 212–236 threads the bilayer; sequence GPVFAVCIFLFSFVIPVLIISVCYS. Topologically, residues 237–264 are cytoplasmic; sequence LMVRRLRGVRLLSGSREKDRNLRRITRL. Residues 265 to 285 form a helical membrane-spanning segment; the sequence is VLVVVAVFVGCWTPVQVFVLV. The Extracellular segment spans residues 286–300; sequence QGLGVQPGSETAVAV. A helical membrane pass occupies residues 301–322; that stretch reads LRFCTALGYVNSCLNPILYAFL. At 323–370 the chain is on the cytoplasmic side; it reads DENFKACFRKFCCAPTRRREMQVSDRVRSIAKDVALACKTSETVPRPA. Cys-334 carries S-palmitoyl cysteine lipidation.

Belongs to the G-protein coupled receptor 1 family. In terms of processing, phosphorylation at Ser-363 requires GRK3. In terms of tissue distribution, detected in brain cortex, stomach, ileum, jejunum and colon.

The protein resides in the cell membrane. The protein localises to the cytoplasmic vesicle. Functionally, G-protein coupled opioid receptor that functions as a receptor for the endogenous neuropeptide nociceptin. Ligand binding causes a conformation change that triggers signaling via guanine nucleotide-binding proteins (G proteins) and modulates the activity of down-stream effectors. Signaling via G proteins mediates inhibition of adenylate cyclase activity and calcium channel activity. Arrestins modulate signaling via G proteins and mediate the activation of alternative signaling pathways that lead to the activation of MAP kinases. Plays a role in modulating nociception and the perception of pain. Plays a role in the regulation of locomotor activity by the neuropeptide nociceptin. This is Nociceptin receptor (OPRL1) from Sus scrofa (Pig).